A 367-amino-acid polypeptide reads, in one-letter code: Methionine aminopeptidase 1 (367 aa).

The C6H2-type zinc finger occupies 3–57 (GILCASPGCGKPAKLQCPTCVNLKLETPSHFCSQECFKTFWPLHKMYHQKGQPEN). Residues cysteine 6, cysteine 11, cysteine 19, cysteine 22, cysteine 34, cysteine 38, histidine 46, and histidine 50 each coordinate Zn(2+). Histidine 185 is an a protein binding site. Aspartate 202, aspartate 213, and histidine 276 together coordinate Zn(2+). Histidine 283 serves as a coordination point for a protein. Zn(2+) is bound by residues glutamate 309 and glutamate 340.

This sequence belongs to the peptidase M24A family. Methionine aminopeptidase type 1 subfamily. Associates with the 60S ribosomal subunit of the 80S translational complex. Zn(2+) is required as a cofactor. The cofactor is Co(2+). Requires Mn(2+) as cofactor. Fe(2+) serves as cofactor.

It is found in the cytoplasm. It carries out the reaction Release of N-terminal amino acids, preferentially methionine, from peptides and arylamides.. Cotranslationally removes the N-terminal methionine from nascent proteins. The N-terminal methionine is often cleaved when the second residue in the primary sequence is small and uncharged (Met-Ala-, Cys, Gly, Pro, Ser, Thr, or Val). This chain is Methionine aminopeptidase 1 (metap1), found in Dictyostelium discoideum (Social amoeba).